The chain runs to 395 residues: Elongation factor Tu (395 aa).

Residues lysine 10 to glutamine 204 form the tr-type G domain. The segment at glycine 19–threonine 26 is G1. Glycine 19–threonine 26 serves as a coordination point for GTP. Residue threonine 26 participates in Mg(2+) binding. The tract at residues glycine 60–asparagine 64 is G2. Residues aspartate 81–glycine 84 are G3. GTP-binding positions include aspartate 81–histidine 85 and asparagine 136–aspartate 139. The G4 stretch occupies residues asparagine 136–aspartate 139. The interval serine 174–leucine 176 is G5.

This sequence belongs to the TRAFAC class translation factor GTPase superfamily. Classic translation factor GTPase family. EF-Tu/EF-1A subfamily. Monomer.

It localises to the cytoplasm. The catalysed reaction is GTP + H2O = GDP + phosphate + H(+). Its function is as follows. GTP hydrolase that promotes the GTP-dependent binding of aminoacyl-tRNA to the A-site of ribosomes during protein biosynthesis. The polypeptide is Elongation factor Tu (Azobacteroides pseudotrichonymphae genomovar. CFP2).